Reading from the N-terminus, the 280-residue chain is Mediator of RNA polymerase II transcription subunit 2 (280 aa).

A disordered region spans residues 212–247 (GLQNTSGGNEKKNDPQINFNDTNAPPSAVNVPENGN). The span at 226–236 (PQINFNDTNAP) shows a compositional bias: polar residues.

The protein belongs to the Mediator complex subunit 2 family. Component of the Mediator complex.

Its subcellular location is the nucleus. Component of the Mediator complex, a coactivator involved in the regulated transcription of nearly all RNA polymerase II-dependent genes. Mediator functions as a bridge to convey information from gene-specific regulatory proteins to the basal RNA polymerase II transcription machinery. Mediator is recruited to promoters by direct interactions with regulatory proteins and serves as a scaffold for the assembly of a functional preinitiation complex with RNA polymerase II and the general transcription factors. This chain is Mediator of RNA polymerase II transcription subunit 2 (MED2), found in Kluyveromyces lactis (strain ATCC 8585 / CBS 2359 / DSM 70799 / NBRC 1267 / NRRL Y-1140 / WM37) (Yeast).